The primary structure comprises 208 residues: Large ribosomal subunit protein bL25 (208 aa).

A disordered region spans residues Ala-188–Glu-208.

The protein belongs to the bacterial ribosomal protein bL25 family. CTC subfamily. Part of the 50S ribosomal subunit; part of the 5S rRNA/L5/L18/L25 subcomplex. Contacts the 5S rRNA. Binds to the 5S rRNA independently of L5 and L18.

In terms of biological role, this is one of the proteins that binds to the 5S RNA in the ribosome where it forms part of the central protuberance. The sequence is that of Large ribosomal subunit protein bL25 from Moorella thermoacetica (strain ATCC 39073 / JCM 9320).